Consider the following 144-residue polypeptide: Large ribosomal subunit protein uL15 (144 aa).

The disordered stretch occupies residues 1 to 54 (MRLNTLSPAEGSKKAGKRLGRGIGSGLGKTGGRGHKGQKSRSGGGVRRGFEGGQ). Residues 21-31 (RGIGSGLGKTG) show a composition bias toward gly residues.

The protein belongs to the universal ribosomal protein uL15 family. Part of the 50S ribosomal subunit.

Functionally, binds to the 23S rRNA. The protein is Large ribosomal subunit protein uL15 of Klebsiella pneumoniae (strain 342).